We begin with the raw amino-acid sequence, 216 residues long: ATP phosphoribosyltransferase (216 aa).

The protein belongs to the ATP phosphoribosyltransferase family. Short subfamily. Heteromultimer composed of HisG and HisZ subunits.

The protein resides in the cytoplasm. The enzyme catalyses 1-(5-phospho-beta-D-ribosyl)-ATP + diphosphate = 5-phospho-alpha-D-ribose 1-diphosphate + ATP. Its pathway is amino-acid biosynthesis; L-histidine biosynthesis; L-histidine from 5-phospho-alpha-D-ribose 1-diphosphate: step 1/9. Functionally, catalyzes the condensation of ATP and 5-phosphoribose 1-diphosphate to form N'-(5'-phosphoribosyl)-ATP (PR-ATP). Has a crucial role in the pathway because the rate of histidine biosynthesis seems to be controlled primarily by regulation of HisG enzymatic activity. This Chromohalobacter salexigens (strain ATCC BAA-138 / DSM 3043 / CIP 106854 / NCIMB 13768 / 1H11) protein is ATP phosphoribosyltransferase.